A 52-amino-acid chain; its full sequence is Large ribosomal subunit protein bL33 (52 aa).

It belongs to the bacterial ribosomal protein bL33 family.

This Campylobacter jejuni subsp. doylei (strain ATCC BAA-1458 / RM4099 / 269.97) protein is Large ribosomal subunit protein bL33.